We begin with the raw amino-acid sequence, 88 residues long: Small ribosomal subunit protein uS15 (88 aa).

Belongs to the universal ribosomal protein uS15 family. In terms of assembly, part of the 30S ribosomal subunit. Forms a bridge to the 50S subunit in the 70S ribosome, contacting the 23S rRNA.

Its function is as follows. One of the primary rRNA binding proteins, it binds directly to 16S rRNA where it helps nucleate assembly of the platform of the 30S subunit by binding and bridging several RNA helices of the 16S rRNA. Forms an intersubunit bridge (bridge B4) with the 23S rRNA of the 50S subunit in the ribosome. In Leptospira biflexa serovar Patoc (strain Patoc 1 / Ames), this protein is Small ribosomal subunit protein uS15.